Consider the following 1484-residue polypeptide: Chromatin remodeling regulator CECR2 (1484 aa).

Positions 170–241 (VQGKSNGELS…RHGSQGPGQG (72 aa)) are disordered. Over residues 197-209 (TGKRRGRPPKRKK) the composition is skewed to basic residues. The span at 210-222 (LQEEILLSEKQEE) shows a compositional bias: basic and acidic residues. The span at 223 to 234 (NSLASEPQTRHG) shows a compositional bias: polar residues. The residue at position 422 (serine 422) is a Phosphoserine. Residues 434–538 (FELDDDFTAM…RCFHRAMMKH (105 aa)) enclose the Bromo domain. Threonine 546 carries the post-translational modification Phosphothreonine. Disordered regions lie at residues 556 to 704 (EKRE…GPRL), 796 to 825 (GNHG…PRTL), 919 to 1053 (GVPY…SYPG), 1165 to 1259 (VMGG…LFSD), 1287 to 1320 (AKVP…LDLD), and 1442 to 1484 (YRPS…LDQS). Serine 571 carries the post-translational modification Phosphoserine. The span at 605–614 (SSGDDQSSSS) shows a compositional bias: low complexity. At serine 1014 the chain carries Phosphoserine. Asymmetric dimethylarginine occurs at positions 1197 and 1203. Residues 1243–1254 (SGPPASQPPPPR) are compositionally biased toward pro residues. Basic and acidic residues predominate over residues 1304 to 1320 (DESMERPESPKEFLDLD). Serine 1312 carries the phosphoserine modification. Positions 1451–1469 (PVQSQASFPKTPTAATSQE) are enriched in polar residues. Residues 1474–1484 (HKPPTLPLDQS) show a composition bias toward pro residues.

As to quaternary structure, component of the CERF-1 ISWI chromatin remodeling complex (also called the CECR2-containing remodeling factor (CERF) complex) at least composed of CECR2 and SMARCA1. Component of the CERF-5 ISWI chromatin remodeling complex at least composed of SMARCA5/SNF2H and CECR2. LUZP1 is detected as part of the CERF-1 and CERF-5 complexes in embryonic stem (ES) cells where it is involved in complex stabilization but is not detected in the complexes in the testis. Interacts with CCAR2; CCAR2 may form part of the CERF-1 and/or CEF-5 ISWI chromatin remodeling complexes in ES cells. Interacts with acetylated lysine residues on histone H2A and H3 (in vitro). Interacts with LRPPRC. In terms of tissue distribution, highly expressed in skeletal muscle, thymus, placenta and lung. Expressed at lower level in brain, heart, colon, spleen, kidney.

The protein localises to the nucleus. Regulatory subunit of the ATP-dependent CERF-1 and CERF-5 ISWI chromatin remodeling complexes, which form ordered nucleosome arrays on chromatin and facilitate access to DNA during DNA-templated processes such as DNA replication, transcription, and repair. The complexes do not have the ability to slide mononucleosomes to the center of a DNA template. The CERF-1 ISWI chromatin remodeling complex has a lower ATP hydrolysis rate than the CERF-5 ISWI chromatin remodeling complex. Plays a role in various processes during development: required during embryogenesis for neural tube closure and inner ear development. In adults, required for spermatogenesis, via the formation of ISWI-type chromatin complexes. In histone-modifying complexes, CECR2 recognizes and binds acylated histones: binds histones that are acetylated and/or butyrylated. May also be involved through its interaction with LRPPRC in the integration of cytoskeletal network with vesicular trafficking, nucleocytosolic shuttling, transcription, chromosome remodeling and cytokinesis. This is Chromatin remodeling regulator CECR2 (CECR2) from Homo sapiens (Human).